The following is a 733-amino-acid chain: Phosphoribosylformylglycinamidine synthase subunit PurL (733 aa).

Histidine 44 is an active-site residue. ATP contacts are provided by tyrosine 47 and lysine 86. Glutamate 88 provides a ligand contact to Mg(2+). Substrate contacts are provided by residues 89 to 92 and arginine 111; that span reads SHNH. Histidine 90 (proton acceptor) is an active-site residue. Residue aspartate 112 coordinates Mg(2+). Residue glutamine 240 coordinates substrate. Aspartate 268 is a binding site for Mg(2+). 312-314 contributes to the substrate binding site; sequence ESQ. The ATP site is built by aspartate 496 and glycine 533. Residue asparagine 534 participates in Mg(2+) binding. Residue serine 536 participates in substrate binding.

Belongs to the FGAMS family. In terms of assembly, monomer. Part of the FGAM synthase complex composed of 1 PurL, 1 PurQ and 2 PurS subunits.

The protein localises to the cytoplasm. The catalysed reaction is N(2)-formyl-N(1)-(5-phospho-beta-D-ribosyl)glycinamide + L-glutamine + ATP + H2O = 2-formamido-N(1)-(5-O-phospho-beta-D-ribosyl)acetamidine + L-glutamate + ADP + phosphate + H(+). It participates in purine metabolism; IMP biosynthesis via de novo pathway; 5-amino-1-(5-phospho-D-ribosyl)imidazole from N(2)-formyl-N(1)-(5-phospho-D-ribosyl)glycinamide: step 1/2. Its function is as follows. Part of the phosphoribosylformylglycinamidine synthase complex involved in the purines biosynthetic pathway. Catalyzes the ATP-dependent conversion of formylglycinamide ribonucleotide (FGAR) and glutamine to yield formylglycinamidine ribonucleotide (FGAM) and glutamate. The FGAM synthase complex is composed of three subunits. PurQ produces an ammonia molecule by converting glutamine to glutamate. PurL transfers the ammonia molecule to FGAR to form FGAM in an ATP-dependent manner. PurS interacts with PurQ and PurL and is thought to assist in the transfer of the ammonia molecule from PurQ to PurL. This Wolinella succinogenes (strain ATCC 29543 / DSM 1740 / CCUG 13145 / JCM 31913 / LMG 7466 / NCTC 11488 / FDC 602W) (Vibrio succinogenes) protein is Phosphoribosylformylglycinamidine synthase subunit PurL.